A 442-amino-acid polypeptide reads, in one-letter code: GTPase Der (442 aa).

2 consecutive EngA-type G domains span residues 2–167 and 175–351; these read RTIA…PIQN and FKFC…EQAM. Residues 8 to 15, 55 to 59, 119 to 122, 181 to 188, 228 to 232, and 293 to 296 contribute to the GTP site; these read GKPNVGKS, DTGGI, NKVE, GRPNVGKS, DTAGV, and NKWD. Residues 352–436 form the KH-like domain; it reads RKVATSLLND…PITLYWQDKN (85 aa).

Belongs to the TRAFAC class TrmE-Era-EngA-EngB-Septin-like GTPase superfamily. EngA (Der) GTPase family. In terms of assembly, associates with the 50S ribosomal subunit.

Functionally, GTPase that plays an essential role in the late steps of ribosome biogenesis. The chain is GTPase Der from Ureaplasma urealyticum serovar 10 (strain ATCC 33699 / Western).